The primary structure comprises 689 residues: Transketolase (689 aa).

Residue His-56 participates in substrate binding. Thiamine diphosphate-binding positions include His-96 and 144–146 (GNL). Residue Asp-185 coordinates Mg(2+). Gly-186 and Asn-215 together coordinate thiamine diphosphate. 2 residues coordinate Mg(2+): Asn-215 and Ile-217. 3 residues coordinate substrate: His-289, Arg-380, and Ser-407. His-289 contributes to the thiamine diphosphate binding site. Glu-434 (proton donor) is an active-site residue. Residue Phe-460 participates in thiamine diphosphate binding. Substrate-binding residues include His-484, Asp-492, and Arg-543.

The protein belongs to the transketolase family. In terms of assembly, homodimer. Requires Mg(2+) as cofactor. Ca(2+) is required as a cofactor. The cofactor is Mn(2+). Co(2+) serves as cofactor. It depends on thiamine diphosphate as a cofactor.

It carries out the reaction D-sedoheptulose 7-phosphate + D-glyceraldehyde 3-phosphate = aldehydo-D-ribose 5-phosphate + D-xylulose 5-phosphate. In terms of biological role, catalyzes the transfer of a two-carbon ketol group from a ketose donor to an aldose acceptor, via a covalent intermediate with the cofactor thiamine pyrophosphate. This Aquifex aeolicus (strain VF5) protein is Transketolase (tkt).